A 482-amino-acid chain; its full sequence is tRNA sulfurtransferase (482 aa).

Residues 58–160 (VEALQELSRV…GNKAYLYSNV (103 aa)) enclose the THUMP domain. Residues 178-179 (LF), 203-204 (HY), arginine 260, glycine 282, and glutamine 291 contribute to the ATP site. Cysteine 341 and cysteine 444 are disulfide-bonded. A Rhodanese domain is found at 400–482 (IPGDSIIIDV…RYRAGLEKTR (83 aa)). Cysteine 444 (cysteine persulfide intermediate) is an active-site residue.

The protein belongs to the ThiI family.

The protein resides in the cytoplasm. It catalyses the reaction [ThiI sulfur-carrier protein]-S-sulfanyl-L-cysteine + a uridine in tRNA + 2 reduced [2Fe-2S]-[ferredoxin] + ATP + H(+) = [ThiI sulfur-carrier protein]-L-cysteine + a 4-thiouridine in tRNA + 2 oxidized [2Fe-2S]-[ferredoxin] + AMP + diphosphate. It carries out the reaction [ThiS sulfur-carrier protein]-C-terminal Gly-Gly-AMP + S-sulfanyl-L-cysteinyl-[cysteine desulfurase] + AH2 = [ThiS sulfur-carrier protein]-C-terminal-Gly-aminoethanethioate + L-cysteinyl-[cysteine desulfurase] + A + AMP + 2 H(+). It functions in the pathway cofactor biosynthesis; thiamine diphosphate biosynthesis. Catalyzes the ATP-dependent transfer of a sulfur to tRNA to produce 4-thiouridine in position 8 of tRNAs, which functions as a near-UV photosensor. Also catalyzes the transfer of sulfur to the sulfur carrier protein ThiS, forming ThiS-thiocarboxylate. This is a step in the synthesis of thiazole, in the thiamine biosynthesis pathway. The sulfur is donated as persulfide by IscS. This chain is tRNA sulfurtransferase, found in Desulfurococcus amylolyticus (strain DSM 18924 / JCM 16383 / VKM B-2413 / 1221n) (Desulfurococcus kamchatkensis).